We begin with the raw amino-acid sequence, 600 residues long: DNA mismatch repair protein MutL (600 aa).

This sequence belongs to the DNA mismatch repair MutL/HexB family.

Functionally, this protein is involved in the repair of mismatches in DNA. It is required for dam-dependent methyl-directed DNA mismatch repair. May act as a 'molecular matchmaker', a protein that promotes the formation of a stable complex between two or more DNA-binding proteins in an ATP-dependent manner without itself being part of a final effector complex. This Rickettsia typhi (strain ATCC VR-144 / Wilmington) protein is DNA mismatch repair protein MutL.